The following is a 657-amino-acid chain: Threonine--tRNA ligase (657 aa).

The TGS domain occupies 7–70 (SQTQVTVTLP…SEDASIEIVT (64 aa)). The catalytic stretch occupies residues 253 to 555 (DHRKLGAELE…LIEHTGGNFP (303 aa)). Residues Cys351, His402, and His532 each coordinate Zn(2+).

The protein belongs to the class-II aminoacyl-tRNA synthetase family. As to quaternary structure, homodimer. It depends on Zn(2+) as a cofactor.

It is found in the cytoplasm. The catalysed reaction is tRNA(Thr) + L-threonine + ATP = L-threonyl-tRNA(Thr) + AMP + diphosphate + H(+). Functionally, catalyzes the attachment of threonine to tRNA(Thr) in a two-step reaction: L-threonine is first activated by ATP to form Thr-AMP and then transferred to the acceptor end of tRNA(Thr). Also edits incorrectly charged L-seryl-tRNA(Thr). This is Threonine--tRNA ligase from Prosthecochloris aestuarii (strain DSM 271 / SK 413).